A 317-amino-acid chain; its full sequence is tRNA dimethylallyltransferase (317 aa).

14-21 is a binding site for ATP; the sequence is GPTASGKS. A substrate-binding site is contributed by 16-21; the sequence is TASGKS. 2 interaction with substrate tRNA regions span residues 39–42 and 163–167; these read DSVL and QRIQR.

The protein belongs to the IPP transferase family. Monomer. The cofactor is Mg(2+).

The enzyme catalyses adenosine(37) in tRNA + dimethylallyl diphosphate = N(6)-dimethylallyladenosine(37) in tRNA + diphosphate. In terms of biological role, catalyzes the transfer of a dimethylallyl group onto the adenine at position 37 in tRNAs that read codons beginning with uridine, leading to the formation of N6-(dimethylallyl)adenosine (i(6)A). This chain is tRNA dimethylallyltransferase, found in Xylella fastidiosa (strain 9a5c).